Here is an 89-residue protein sequence, read N- to C-terminus: UPF0223 protein BCG9842_B1176 (89 aa).

Belongs to the UPF0223 family.

The protein is UPF0223 protein BCG9842_B1176 of Bacillus cereus (strain G9842).